We begin with the raw amino-acid sequence, 490 residues long: Betaine aldehyde dehydrogenase (490 aa).

Residues T26, I27, and D93 each contribute to the K(+) site. NAD(+) is bound at residue 150-152; sequence GAW. K162 acts as the Charge relay system in catalysis. 176-179 contributes to the NAD(+) binding site; that stretch reads KPSE. Residue V180 participates in K(+) binding. 230 to 233 lines the NAD(+) pocket; the sequence is GVAS. L246 is a K(+) binding site. The active-site Proton acceptor is the E252. NAD(+) is bound by residues G254, C286, and E387. C286 (nucleophile) is an active-site residue. C286 is subject to Cysteine sulfenic acid (-SOH). K(+) is bound by residues K457 and G460. The Charge relay system role is filled by E464.

Belongs to the aldehyde dehydrogenase family. In terms of assembly, dimer of dimers. Requires K(+) as cofactor.

The catalysed reaction is betaine aldehyde + NAD(+) + H2O = glycine betaine + NADH + 2 H(+). It functions in the pathway amine and polyamine biosynthesis; betaine biosynthesis via choline pathway; betaine from betaine aldehyde: step 1/1. Its function is as follows. Involved in the biosynthesis of the osmoprotectant glycine betaine. Catalyzes the irreversible oxidation of betaine aldehyde to the corresponding acid. This is Betaine aldehyde dehydrogenase from Escherichia coli O6:H1 (strain CFT073 / ATCC 700928 / UPEC).